A 352-amino-acid polypeptide reads, in one-letter code: MNTTSSAAPPSLGVEFISLLAIILLSVALAVGLPGNSFVVWSILKRMQKRSVTALMVLNLALADLAVLLTAPFFLHFLAQGTWSFGLAGCRLCHYVCGVSMYASVLLITAMSLDRSLAVARPFVSQKLRTKAMARRVLAGIWVLSFLLATPVLAYRTVVPWKTNMSLCFPRYPSEGHRAFHLIFEAVTGFLLPFLAVVASYSDIGRRLQARRFRRSRRTGRLVVLIILTFAAFWLPYHVVNLAEAGRALAGQAAGLGLVGKRLSLARNVLIALAFLSSSVNPVLYACAGGGLLRSAGVGFVAKLLEGTGSEASSTRRGGSLGQTARSGPAALEPGPSESLTASSPLKLNELN.

The Extracellular portion of the chain corresponds to 1 to 19 (MNTTSSAAPPSLGVEFISL). Asn2 is a glycosylation site (N-linked (GlcNAc...) asparagine). The helical transmembrane segment at 20-42 (LAIILLSVALAVGLPGNSFVVWS) threads the bilayer. The Cytoplasmic segment spans residues 43-54 (ILKRMQKRSVTA). A helical membrane pass occupies residues 55–75 (LMVLNLALADLAVLLTAPFFL). At 76-91 (HFLAQGTWSFGLAGCR) the chain is on the extracellular side. The helical transmembrane segment at 92-113 (LCHYVCGVSMYASVLLITAMSL) threads the bilayer. Residues 114 to 138 (DRSLAVARPFVSQKLRTKAMARRVL) are Cytoplasmic-facing. A helical transmembrane segment spans residues 139 to 159 (AGIWVLSFLLATPVLAYRTVV). The Extracellular portion of the chain corresponds to 160 to 178 (PWKTNMSLCFPRYPSEGHR). A glycan (N-linked (GlcNAc...) asparagine) is linked at Asn164. Residues 179 to 199 (AFHLIFEAVTGFLLPFLAVVA) form a helical membrane-spanning segment. Over 200–221 (SYSDIGRRLQARRFRRSRRTGR) the chain is Cytoplasmic. The helical transmembrane segment at 222-242 (LVVLIILTFAAFWLPYHVVNL) threads the bilayer. The Extracellular portion of the chain corresponds to 243–268 (AEAGRALAGQAAGLGLVGKRLSLARN). A helical membrane pass occupies residues 269–289 (VLIALAFLSSSVNPVLYACAG). The Cytoplasmic segment spans residues 290 to 352 (GGLLRSAGVG…SSPLKLNELN (63 aa)). Composition is skewed to polar residues over residues 310–326 (SEAS…QTAR) and 338–352 (ESLT…NELN). A disordered region spans residues 310–352 (SEASSTRRGGSLGQTARSGPAALEPGPSESLTASSPLKLNELN).

Belongs to the G-protein coupled receptor 1 family. In terms of processing, phosphorylated by GRK6 upon leukotriene B4 binding; which promotes desensitization. In terms of tissue distribution, expressed at highest levels in heart, skeletal muscle and at lower levels in brain and liver. High level of expression in lymphoid tissues.

It localises to the cell membrane. Receptor for extracellular ATP &gt; UTP and ADP. The activity of this receptor is mediated by G proteins which activate a phosphatidylinositol-calcium second messenger system. May be the cardiac P2Y receptor involved in the regulation of cardiac muscle contraction through modulation of L-type calcium currents. Is a receptor for leukotriene B4, a potent chemoattractant involved in inflammation and immune response. The chain is Leukotriene B4 receptor 1 (LTB4R) from Homo sapiens (Human).